Consider the following 357-residue polypeptide: Tribbles homolog 3 (357 aa).

A disordered region spans residues Met-1–Thr-63. The interaction with DDIT3/CHOP stretch occupies residues Met-1–Leu-127. Residues Leu-68–Arg-316 form the Protein kinase domain. Residues Asp-333–Gly-357 are disordered. The segment covering Gly-341–Glu-350 has biased composition (acidic residues).

The protein belongs to the protein kinase superfamily. CAMK Ser/Thr protein kinase family. Tribbles subfamily. Interacts with AKT1, AKT2, MAP2K1 and MAP2K7. Interacts with ATF4. Interacts with DDIT3/CHOP and inhibits its interaction with EP300/P300. Interacts with APOBEC3C. Interacts (via N-terminus) with APOBEC3A. Interacts with RELA.

It is found in the nucleus. In terms of biological role, inactive protein kinase which acts as a regulator of the integrated stress response (ISR), a process for adaptation to various stress. Inhibits the transcriptional activity of DDIT3/CHOP and is involved in DDIT3/CHOP-dependent cell death during ER stress. May play a role in programmed neuronal cell death but does not appear to affect non-neuronal cells. Acts as a negative feedback regulator of the ATF4-dependent transcription during the ISR: while TRIB3 expression is promoted by ATF4, TRIB3 protein interacts with ATF4 and inhibits ATF4 transcription activity. Disrupts insulin signaling by binding directly to Akt kinases and blocking their activation. May bind directly to and mask the 'Thr-308' phosphorylation site in AKT1. Interacts with the NF-kappa-B transactivator p65 RELA and inhibits its phosphorylation and thus its transcriptional activation activity. Interacts with MAPK kinases and regulates activation of MAP kinases. Can inhibit APOBEC3A editing of nuclear DNA. The polypeptide is Tribbles homolog 3 (TRIB3) (Bos taurus (Bovine)).